A 145-amino-acid polypeptide reads, in one-letter code: MDESKKNERLQQLTDIQYNVTQKAGTERPFQNEFYDNEVKGIYVDIVSGKPLFSSNDQYDAGCGWPSFTKPIDEAEVIEHRDLTHGMIRTEVKSADADSHLGHVFPDGPQDKGGLRYCINSAALRFIPVDKLEEEGYQAYKKIFE.

Residues 6-129 (KNERLQQLTD…NSAALRFIPV (124 aa)) enclose the MsrB domain. Cys118 serves as the catalytic Nucleophile.

It belongs to the MsrB Met sulfoxide reductase family.

The catalysed reaction is L-methionyl-[protein] + [thioredoxin]-disulfide + H2O = L-methionyl-(R)-S-oxide-[protein] + [thioredoxin]-dithiol. This Listeria monocytogenes serovar 1/2a (strain ATCC BAA-679 / EGD-e) protein is Peptide methionine sulfoxide reductase MsrB.